A 374-amino-acid polypeptide reads, in one-letter code: Conserved virulence factor C (374 aa).

The protein belongs to the CvfC family.

In terms of biological role, required for hemolysin production. Contributes to virulence in both silkworm-infection model and mice. In Staphylococcus aureus (strain NCTC 8325 / PS 47), this protein is Conserved virulence factor C (cvfC).